The sequence spans 506 residues: Protein MGF 505-4R (506 aa).

The protein belongs to the asfivirus MGF 505 family.

Functionally, plays a role in virus cell tropism, and may be required for efficient virus replication in macrophages. The sequence is that of Protein MGF 505-4R from Ornithodoros (relapsing fever ticks).